The primary structure comprises 239 residues: Probable 2-phosphosulfolactate phosphatase (239 aa).

The protein belongs to the ComB family. Requires Mg(2+) as cofactor.

The catalysed reaction is (2R)-O-phospho-3-sulfolactate + H2O = (2R)-3-sulfolactate + phosphate. In Clostridium botulinum (strain Langeland / NCTC 10281 / Type F), this protein is Probable 2-phosphosulfolactate phosphatase.